Here is a 201-residue protein sequence, read N- to C-terminus: Large ribosomal subunit protein uL4 (201 aa).

Residues A45 to S72 form a disordered region.

It belongs to the universal ribosomal protein uL4 family. Part of the 50S ribosomal subunit.

In terms of biological role, one of the primary rRNA binding proteins, this protein initially binds near the 5'-end of the 23S rRNA. It is important during the early stages of 50S assembly. It makes multiple contacts with different domains of the 23S rRNA in the assembled 50S subunit and ribosome. Its function is as follows. Forms part of the polypeptide exit tunnel. The sequence is that of Large ribosomal subunit protein uL4 from Shewanella baltica (strain OS223).